A 138-amino-acid polypeptide reads, in one-letter code: Secreted RxLR effector protein 91 (138 aa).

An N-terminal signal peptide occupies residues 1 to 18 (MVIPHIICLPMALHLWTC). The RxLR motif lies at 34-37 (RRLR). N-linked (GlcNAc...) asparagine glycosylation occurs at asparagine 93.

The protein belongs to the RxLR effector family.

Its subcellular location is the secreted. It is found in the host nucleus. In terms of biological role, secreted effector that completely suppresses the host cell death induced by cell death-inducing proteins. This is Secreted RxLR effector protein 91 from Plasmopara viticola (Downy mildew of grapevine).